The sequence spans 47 residues: Large ribosomal subunit protein bL34 (47 aa).

This sequence belongs to the bacterial ribosomal protein bL34 family.

The chain is Large ribosomal subunit protein bL34 (rpmH) from Mycobacterium leprae (strain TN).